The primary structure comprises 355 residues: Hydroxylysine kinase (355 aa).

D215 (proton acceptor) is an active-site residue.

Belongs to the aminoglycoside phosphotransferase family.

It localises to the cytoplasm. The catalysed reaction is (5R)-5-hydroxy-L-lysine + GTP = (5R)-5-phosphooxy-L-lysine + GDP + H(+). In terms of biological role, catalyzes the GTP-dependent phosphorylation of 5-hydroxy-L-lysine. The protein is Hydroxylysine kinase (hykk) of Danio rerio (Zebrafish).